A 282-amino-acid chain; its full sequence is NADPH-dependent 7-cyano-7-deazaguanine reductase (282 aa).

88 to 90 serves as a coordination point for substrate; it reads IES. 90–91 serves as a coordination point for NADPH; that stretch reads SK. Residue cysteine 190 is the Thioimide intermediate of the active site. The active-site Proton donor is the aspartate 197. Residue 229–230 participates in substrate binding; that stretch reads HE. 258 to 259 contributes to the NADPH binding site; the sequence is RG.

It belongs to the GTP cyclohydrolase I family. QueF type 2 subfamily. As to quaternary structure, homodimer.

The protein localises to the cytoplasm. It catalyses the reaction 7-aminomethyl-7-carbaguanine + 2 NADP(+) = 7-cyano-7-deazaguanine + 2 NADPH + 3 H(+). It participates in tRNA modification; tRNA-queuosine biosynthesis. Functionally, catalyzes the NADPH-dependent reduction of 7-cyano-7-deazaguanine (preQ0) to 7-aminomethyl-7-deazaguanine (preQ1). The polypeptide is NADPH-dependent 7-cyano-7-deazaguanine reductase (Escherichia coli O17:K52:H18 (strain UMN026 / ExPEC)).